Consider the following 212-residue polypeptide: HTH-type transcriptional regulatory protein RaaS (212 aa).

One can recognise an HTH tetR-type domain in the interval Leu6–Ile65. Residues Gly28–Phe47 constitute a DNA-binding region (H-T-H motif).

As to quaternary structure, homodimer. Interacts with long chain acyl-CoA derivatives. Interacts with several drugs such rhodamine 6G, ethidium and safranin O.

Its activity is regulated as follows. Interaction with long chain acyl-CoA derivatives (oleoyl-CoA and, to lesser extent, stearoyl-CoA) prevents binding to DNA, leading to the expression of the target genes. Long chain acyl-CoA derivatives may serve as biological indicators of the bacterial metabolic state. Regulates the expression of the Rv1217c-Rv1218c multidrug efflux system and its own expression. Acts by binding to promoter regions of Rv1219c and upstream of the Rv1218c gene. Important for survival in prolonged stationary phase and during macrophage infection. May be used to eliminate non-growing mycobacteria. This is HTH-type transcriptional regulatory protein RaaS from Mycobacterium tuberculosis (strain ATCC 25618 / H37Rv).